Here is a 351-residue protein sequence, read N- to C-terminus: MEDRSGFWQVLQQLAPGTALREGLESILLARTGSLIVVGDSPEVLALVDGGFRLDCEFTPTRLYELAKMDGAIILTRDAQRILYANAMLVPDPSIPTSETGTRHRTAERVARQTGELVISISQRRDLITLYKGPMKYILRDFAVVLTKANQALQTLEKYKLVRDQAVARLSALELDDMVSALDVALVVQRTEMLLRIGKEIERYIVELGTEGRLVAMQLEELLAGVAAEGLLIIRDYASTDDPQHAAALRQQMAEWTYEELQDLAAVARLLGAGALDSPLGARGYRMLRRIPRLPAAVIENLVARFGRLQRVLAASLEELDDVEGIGEVRARAIQEGLRRMRMQFALERQL.

Positions 4 to 142 constitute a DAC domain; that stretch reads RSGFWQVLQQ…GPMKYILRDF (139 aa). ATP is bound by residues G71, L89, and 102-106; that span reads TRHRT.

The protein belongs to the DisA family. Homooctamer. Mg(2+) serves as cofactor.

The enzyme catalyses 2 ATP = 3',3'-c-di-AMP + 2 diphosphate. Functionally, participates in a DNA-damage check-point that is active prior to asymmetric division when DNA is damaged. DisA forms globular foci that rapidly scan along the chromosomes during sporulation, searching for lesions. When a lesion is present, DisA pauses at the lesion site. This triggers a cellular response that culminates in a temporary block in sporulation initiation. In terms of biological role, also has diadenylate cyclase activity, catalyzing the condensation of 2 ATP molecules into cyclic di-AMP (c-di-AMP). c-di-AMP acts as a signaling molecule that couples DNA integrity with progression of sporulation. The rise in c-di-AMP level generated by DisA while scanning the chromosome, operates as a positive signal that advances sporulation; upon encountering a lesion, the DisA focus arrests at the damaged site and halts c-di-AMP synthesis. The sequence is that of DNA integrity scanning protein DisA from Symbiobacterium thermophilum (strain DSM 24528 / JCM 14929 / IAM 14863 / T).